The chain runs to 274 residues: Ribulose-phosphate 3-epimerase, chloroplastic (274 aa).

The N-terminal 39 residues, 1–39 (MASPSSSSSLCSTFASPRAASLGRRLAFSSPRKAFRVRA), are a transit peptide targeting the chloroplast. Serine 56 is a substrate binding site. Residues histidine 81, aspartate 83, and histidine 114 each contribute to the a divalent metal cation site. Residue aspartate 83 is the Proton acceptor of the active site. Substrate-binding positions include histidine 114, 192-195 (GFGG), 225-227 (DGG), and 247-248 (GS). Aspartate 225 provides a ligand contact to a divalent metal cation. Catalysis depends on aspartate 225, which acts as the Proton donor.

This sequence belongs to the ribulose-phosphate 3-epimerase family. In terms of assembly, homooctamer. Requires Co(2+) as cofactor. It depends on Fe(2+) as a cofactor. Mn(2+) serves as cofactor. Zn(2+) is required as a cofactor.

It is found in the plastid. Its subcellular location is the chloroplast thylakoid membrane. It carries out the reaction D-ribulose 5-phosphate = D-xylulose 5-phosphate. It functions in the pathway carbohydrate biosynthesis; Calvin cycle. Functionally, catalyzes the reversible epimerization of D-ribulose 5-phosphate to D-xylulose 5-phosphate. This chain is Ribulose-phosphate 3-epimerase, chloroplastic (RPE), found in Oryza sativa subsp. japonica (Rice).